A 525-amino-acid polypeptide reads, in one-letter code: MDLAVGPGAAGPSNVPAFLTKLWTLVSDPDTDALICWSPSGNSFHVFDQGQFAKEVLPKYFKHNNMASFVRQLNMYGFRKVVHIEQGGLVKPERDDTEFQHPCFLRGQEQLLENIKRKVTSVSTLKSEDIKIRQDSVTRLLTDVQLMKGKQECMDSKLLAMKHENEALWREVASLRQKHAQQQKVVNKLIQFLISLVQSNRILGVKRKIPLMLSDSNSAHSVPKYGRQYSLEHVHGPGPYSAPSPAYSSSSLYSSDAVTSSGPIISDITELAPTSPLASPGRSIDERPLSSSTLVRVKQEPPSPPHSPRVLEASPGRPSSMDTPLSPTAFIDSILRESEPTPAASNTAPMDTTGAQAPALPTPSTPEKCLSVACLDKNELSDHLDAMDSNLDNLQTMLTSHGFSVDTSALLDLFSPSVTMPDMSLPDLDSSLASIQELLSPQEPPRPIEAENSNPDSGKQLVHYTAQPLFLLDPDAVDTGSSELPVLFELGESSYFSEGDDYTDDPTISLLTGTEPHKAKDPTVS.

Met-1 is modified (N-acetylmethionine). Residues 15–120 are DNA-binding domain; the sequence is VPAFLTKLWT…LLENIKRKVT (106 aa). Residue Lys-80 is modified to N6-acetyllysine. Position 91 is an N6-acetyllysine; alternate (Lys-91). Residue Lys-91 forms a Glycyl lysine isopeptide (Lys-Gly) (interchain with G-Cter in SUMO2); alternate linkage. N6-acetyllysine is present on Lys-118. Ser-121 carries the post-translational modification Phosphoserine; by MAPKAPK2. Glycyl lysine isopeptide (Lys-Gly) (interchain with G-Cter in SUMO2) cross-links involve residues Lys-126 and Lys-131. Residues 130–203 are hydrophobic repeat HR-A/B; the sequence is IKIRQDSVTR…ISLVQSNRIL (74 aa). Thr-142 is modified (phosphothreonine; by CK2). Lys-150 and Lys-188 each carry N6-acetyllysine. Residues 203–224 form a d domain region; sequence LGVKRKIPLMLSDSNSAHSVPK. Position 208 is an N6-acetyllysine; alternate (Lys-208). A Glycyl lysine isopeptide (Lys-Gly) (interchain with G-Cter in SUMO2); alternate cross-link involves residue Lys-208. Ser-216 carries the post-translational modification Phosphoserine; by PLK1. The tract at residues 221–310 is regulatory domain; the sequence is SVPKYGRQYS…PPSPPHSPRV (90 aa). A Glycyl lysine isopeptide (Lys-Gly) (interchain with G-Cter in SUMO2) cross-link involves residue Lys-224. Ser-230 carries the phosphoserine; by CAMK2A modification. Disordered stretches follow at residues 272–327 and 340–365; these read APTS…PLSP and PTPA…TPST. Residues Ser-275 and Ser-292 each carry the phosphoserine modification. At Lys-298 the chain carries N6-acetyllysine; alternate. Residue Lys-298 forms a Glycyl lysine isopeptide (Lys-Gly) (interchain with G-Cter in SUMO2); alternate linkage. Residue Lys-298 forms a Glycyl lysine isopeptide (Lys-Gly) (interchain with G-Cter in SUMO); alternate linkage. Ser-303, Ser-307, Ser-314, and Ser-319 each carry phosphoserine. Phosphoserine; by PKA is present on Ser-320. At Thr-323 the chain carries Phosphothreonine. Phosphoserine; by MAPK12 is present on Ser-326. The span at 343–355 shows a compositional bias: polar residues; that stretch reads AASNTAPMDTTGA. Phosphoserine is present on Ser-345. Residues 367-525 are transactivation domain; the sequence is EKCLSVACLD…PHKAKDPTVS (159 aa). Positions 380-405 are hydrophobic repeat HR-C; sequence LSDHLDAMDSNLDNLQTMLTSHGFSV. Residues 408-416 carry the 9aaTAD motif; that stretch reads SALLDLFSP. Position 415 is a phosphoserine; by PLK1 (Ser-415). Ser-440 is subject to Phosphoserine. Disordered regions lie at residues 441–460 and 495–525; these read PQEP…SGKQ and YFSE…PTVS. Residues 515–525 show a composition bias toward basic and acidic residues; the sequence is EPHKAKDPTVS. Position 520 is an N6-acetyllysine (Lys-520).

Belongs to the HSF family. In terms of assembly, monomer; cytoplasmic latent and transcriptionally inactive monomeric form in unstressed cells. Homotrimer; in response to stress, such as heat shock, homotrimerizes and translocates into the nucleus, binds to heat shock element (HSE) sequences in promoter of heat shock protein (HSP) genes and acquires transcriptional ability. Interacts (via monomeric form) with FKBP4; this interaction occurs in unstressed cells. Associates (via monomeric form) with HSP90 proteins in a multichaperone complex in unnstressed cell; this association maintains HSF1 in a non-DNA-binding and transcriptional inactive form by preventing HSF1 homotrimerization. Homotrimeric transactivation activity is modulated by protein-protein interactions and post-translational modifications. Interacts with HSP90AA1; this interaction is decreased in a IER5-dependent manner, promoting HSF1 accumulation in the nucleus, homotrimerization and DNA-binding activities. Part (via regulatory domain in the homotrimeric form) of a large heat shock-induced HSP90-dependent multichaperone complex at least composed of FKBP4, FKBP5, HSP90 proteins, PPID, PPP5C and PTGES3; this association maintains the HSF1 homotrimeric DNA-bound form in a transcriptionally inactive form. Interacts with BAG3 (via BAG domain); this interaction occurs in normal and heat-shocked cells promoting nuclear shuttling of HSF1 in a BAG3-dependent manner. Interacts (via homotrimeric and hyperphosphorylated form) with FKBP4; this interaction occurs upon heat shock in a HSP90-dependent multichaperone complex. Interacts (via homotrimeric form preferentially) with EEF1A proteins. In heat shocked cells, stress-denatured proteins compete with HSF1 homotrimeric DNA-bound form for association of the HSP90-dependent multichaperone complex, and hence alleviating repression of HSF1-mediated transcriptional activity. Interacts (via homotrimeric form preferentially) with DAXX; this interaction relieves homotrimeric HSF1 from repression of its transcriptional activity by HSP90-dependent multichaperone complex upon heat shock. Interacts (via D domain and preferentially with hyperphosphorylated form) with JNK1; this interaction occurs under both normal growth conditions and immediately upon heat shock. Interacts (via D domain and preferentially with hyperphosphorylated form) with MAPK3; this interaction occurs upon heat shock. Interacts with IER5 (via central region); this interaction promotes PPP2CA-induced dephosphorylation on Ser-121, Ser-307, Ser-314 and Thr-323 and HSF1 transactivation activity. Found in a ribonucleoprotein complex composed of the HSF1 homotrimeric form, translation elongation factor eEF1A proteins and non-coding RNA heat shock RNA-1 (HSR1); this complex occurs upon heat shock and stimulates HSF1 DNA-binding activity. Interacts (via transactivation domain) with HSPA1A/HSP70 and DNAJB1; these interactions result in the inhibition of heat shock- and HSF1-induced transcriptional activity during the attenuation and recovery phase from heat shock. Interacts (via Ser-303 and Ser-307 phosphorylated form) with YWHAE; this interaction promotes HSF1 sequestration in the cytoplasm in an ERK-dependent manner. Found in a complex with IER5 and PPP2CA. Interacts with TPR; this interaction increases upon heat shock and stimulates export of HSP70 mRNA. Interacts with SYMPK (via N-terminus) and CSTF2; these interactions occur upon heat shock. Interacts (via transactivation domain) with HSPA8. Interacts with EEF1D; this interaction occurs at heat shock promoter element (HSE) sequences. Interacts with MAPKAPK2. Interacts with PRKACA/PKA. Interacts (via transactivation domain) with GTF2A2. Interacts (via transactivation domain) with GTF2B. Interacts (via transactivation domain) with TBP. Interacts with CDK9, CCNT1 and EP300. Interacts (via N-terminus) with XRCC5 (via N-terminus) and XRCC6 (via N-terminus); these interactions are direct and prevent XRCC5/XRCC6 heterodimeric binding and non-homologous end joining (NHEJ) repair activities induced by ionizing radiation (IR). Interacts with PLK1; this interaction occurs during the early mitotic period, increases upon heat shock but does not modulate neither HSF1 homotrimerization and DNA-binding activities. Interacts (via Ser-216 phosphorylated form) with CDC20; this interaction occurs in mitosis in a MAD2L1-dependent manner and prevents PLK1-stimulated degradation of HSF1 by blocking the recruitment of the SCF(BTRC) ubiquitin ligase complex. Interacts with MAD2L1; this interaction occurs in mitosis. Interacts with BTRC; this interaction occurs during mitosis, induces its ubiquitin-dependent degradation following stimulus-dependent phosphorylation at Ser-216, a process inhibited by CDC20. Interacts with HSP90AA1 and HSP90AB1. Forms a complex with TTC5/STRAP and p300/EP300; these interactions augment chromatin-bound HSF1 and p300/EP300 histone acetyltransferase activity. Phosphorylated. Phosphorylated in unstressed cells; this phosphorylation is constitutive and implicated in the repression of HSF1 transcriptional activity. Phosphorylated on Ser-121 by MAPKAPK2; this phosphorylation promotes interaction with HSP90 proteins and inhibits HSF1 homotrimerization, DNA-binding and transactivation activities. Phosphorylation on Ser-303 by GSK3B/GSK3-beat and on Ser-307 by MAPK3 within the regulatory domain is involved in the repression of HSF1 transcriptional activity and occurs in a RAF1-dependent manner. Phosphorylation on Ser-303 and Ser-307 increases HSF1 nuclear export in a YWHAE- and XPO1/CRM1-dependent manner. Phosphorylation on Ser-307 is a prerequisite for phosphorylation on Ser-303. According to, Ser-303 is not phosphorylated in unstressed cells. Phosphorylated on Ser-415 by PLK1; phosphorylation promotes nuclear translocation upon heat shock. Hyperphosphorylated upon heat shock and during the attenuation and recovery phase period of the heat shock response. Phosphorylated on Thr-142; this phosphorylation increases HSF1 transactivation activity upon heat shock. Phosphorylation on Ser-230 by CAMK2A; this phosphorylation enhances HSF1 transactivation activity upon heat shock. Phosphorylation on Ser-326 by MAPK12; this phosphorylation enhances HSF1 nuclear translocation, homotrimerization and transactivation activities upon heat shock. Phosphorylated on Ser-320 by PRKACA/PKA; this phosphorylation promotes nuclear localization and transcriptional activity upon heat shock. Phosphorylated by MAPK8; this phosphorylation occurs upon heat shock, induces HSF1 translocation into nuclear stress bodies and negatively regulates transactivation activity. Neither basal nor stress-inducible phosphorylation on Ser-230, Ser-292, Ser-303, Ser-307, Ser-314, Ser-319, Ser-320, Thr-323, Ser-326, Ser-338, Ser-345, Ser-364 and Thr-365 within the regulatory domain is involved in the regulation of HSF1 subcellular localization or DNA-binding activity; however, it negatively regulates HSF1 transactivation activity. Phosphorylated on Ser-216 by PLK1 in the early mitotic period; this phosphorylation regulates HSF1 localization to the spindle pole, the recruitment of the SCF(BTRC) ubiquitin ligase complex inducing HSF1 degradation, and hence mitotic progression. Dephosphorylated on Ser-121, Ser-307, Ser-314 and Thr-323 by phosphatase PPP2CA in an IER5-dependent manner, leading to HSF1-mediated transactivation activity. Post-translationally, sumoylated with SUMO1 and SUMO2 upon heat shock in a ERK2-dependent manner. Sumoylated by SUMO1 on Lys-298; sumoylation occurs upon heat shock and promotes its localization to nuclear stress bodies and DNA-binding activity. Phosphorylation on Ser-303 and Ser-307 is probably a prerequisite for sumoylation. In terms of processing, acetylated on Lys-118; this acetylation is decreased in a IER5-dependent manner. Acetylated on Lys-118, Lys-208 and Lys-298; these acetylations occur in a EP300-dependent manner. Acetylated on Lys-80; this acetylation inhibits DNA-binding activity upon heat shock. Deacetylated on Lys-80 by SIRT1; this deacetylation increases DNA-binding activity. Ubiquitinated by SCF(BTRC) and degraded following stimulus-dependent phosphorylation at Ser-216 by PLK1 in mitosis. Polyubiquitinated. Undergoes proteasomal degradation upon heat shock and during the attenuation and recovery phase period of the heat shock response.

It localises to the nucleus. The protein localises to the cytoplasm. It is found in the nucleoplasm. Its subcellular location is the perinuclear region. The protein resides in the cytoskeleton. It localises to the spindle pole. The protein localises to the microtubule organizing center. It is found in the centrosome. Its subcellular location is the chromosome. The protein resides in the centromere. It localises to the kinetochore. Its function is as follows. Functions as a stress-inducible and DNA-binding transcription factor that plays a central role in the transcriptional activation of the heat shock response (HSR), leading to the expression of a large class of molecular chaperones, heat shock proteins (HSPs), that protect cells from cellular insult damage. In unstressed cells, is present in a HSP90-containing multichaperone complex that maintains it in a non-DNA-binding inactivated monomeric form. Upon exposure to heat and other stress stimuli, undergoes homotrimerization and activates HSP gene transcription through binding to site-specific heat shock elements (HSEs) present in the promoter regions of HSP genes. Upon heat shock stress, forms a chromatin-associated complex with TTC5/STRAP and p300/EP300 to stimulate HSR transcription, therefore increasing cell survival. Activation is reversible, and during the attenuation and recovery phase period of the HSR, returns to its unactivated form. Binds to inverted 5'-NGAAN-3' pentamer DNA sequences. Binds to chromatin at heat shock gene promoters. Activates transcription of transcription factor FOXR1 which in turn activates transcription of the heat shock chaperones HSPA1A and HSPA6 and the antioxidant NADPH-dependent reductase DHRS2. Binds the promoter region upstream of exon 1 of Mpv17l to activate expression of the M-LPS isoform which is involved in metabolism of reactive oxygen species. Also serves several other functions independently of its transcriptional activity. Involved in the repression of Ras-induced transcriptional activation of the c-fos gene in heat-stressed cells. Positively regulates pre-mRNA 3'-end processing and polyadenylation of HSP70 mRNA upon heat-stressed cells in a symplekin (SYMPK)-dependent manner. Plays a role in nuclear export of stress-induced HSP70 mRNA. Plays a role in the regulation of mitotic progression. Also plays a role as a negative regulator of non-homologous end joining (NHEJ) repair activity in a DNA damage-dependent manner. Involved in stress-induced cancer cell proliferation in a IER5-dependent manner. The chain is Heat shock factor protein 1 from Mus musculus (Mouse).